The primary structure comprises 1005 residues: Probable histidine kinase 4 (1005 aa).

Topologically, residues 1–37 (MGVGGGGGGGGGEAAAAVAVEGDEAGKGRRWWRVKVK) are cytoplasmic. Residues 38-58 (LSTVAVVAWVLASAALWAGLH) traverse the membrane as a helical segment. Topologically, residues 59-333 (WRFRRAALHK…YRNKLHVSWS (275 aa)) are extracellular. In terms of domain architecture, CHASE spans 110-321 (HPPALDQDTF…GDPLRKHQMV (212 aa)). A helical membrane pass occupies residues 334–354 (AITTPSGVFVICMLVGYIIYA). The Cytoplasmic portion of the chain corresponds to 355 to 1005 (AWSRYDNVKE…QKFLGPCVSS (651 aa)). The region spanning 389–675 (TVSHEIRTPM…TFTFTAVLRR (287 aa)) is the Histidine kinase domain. Position 392 is a phosphohistidine; by autocatalysis (His392). 2 consecutive Response regulatory domains span residues 700–829 (SALL…FQAL) and 862–999 (NILV…QKFL). Asp912 bears the 4-aspartylphosphate mark.

In terms of processing, activation probably requires a transfer of a phosphate group between a His in the transmitter domain and an Asp of the receiver domain. As to expression, highly expressed in young leaves and spikelets, and at lower levels in roots, mature leaves and stems.

Its subcellular location is the cell membrane. The catalysed reaction is ATP + protein L-histidine = ADP + protein N-phospho-L-histidine.. In terms of biological role, cytokinin receptor related to bacterial two-component regulators. Functions as a histidine kinase and transmits the stress signal to a downstream MAPK cascade. The chain is Probable histidine kinase 4 from Oryza sativa subsp. japonica (Rice).